Reading from the N-terminus, the 457-residue chain is L-asparaginase-like protein GL17509 (457 aa).

The signal sequence occupies residues 1 to 20 (MRYLCRAQLLSLLLLPLLKA). 3 cysteine pairs are disulfide-bonded: C72–C78, C172–C188, and C327–C354.

It belongs to the Ntn-hydrolase family.

The protein is L-asparaginase-like protein GL17509 of Drosophila persimilis (Fruit fly).